Consider the following 563-residue polypeptide: Protein NRT1/ PTR FAMILY 5.9 (563 aa).

A helical membrane pass occupies residues 56–76 (TWAGFTSMLPLFSAPLADTYW). Residue T81 is modified to Phosphothreonine. 10 helical membrane passes run 82 to 102 (ILASSSVYFVGLVGLTWTAFA), 110 to 130 (TISSYFLYSSLCLVSIGLGVL), 168 to 188 (FFQLWYFGVCTGSLMGVTVMA), 194 to 214 (FGWVLGFAIPGIVIFLSILVF), 317 to 337 (FPIWMMLLMFAVIFQLPATFF), 362 to 382 (TITLSIILLMPLYDKILIPIT), 394 to 414 (VMERMGVGMFLSIIAIVIAAI), 441 to 461 (IFWLLPQYILLGISDIFTVVG), 479 to 499 (FALYTSVFGVGSFVSAALISI), and 528 to 548 (WLLALTSTISFVVYIFLCKFF).

The protein belongs to the major facilitator superfamily. Proton-dependent oligopeptide transporter (POT/PTR) (TC 2.A.17) family. Expressed in roots and flowers.

The protein localises to the membrane. This is Protein NRT1/ PTR FAMILY 5.9 (NPF5.9) from Arabidopsis thaliana (Mouse-ear cress).